Reading from the N-terminus, the 392-residue chain is Formate-dependent phosphoribosylglycinamide formyltransferase (392 aa).

N(1)-(5-phospho-beta-D-ribosyl)glycinamide is bound by residues Glu22 to Leu23 and Glu82. ATP-binding positions include Arg114, Lys155, Ser160 to Gln165, Glu195 to Val198, and Glu203. One can recognise an ATP-grasp domain in the interval Arg119–Leu308. Glu267 and Glu279 together coordinate Mg(2+). N(1)-(5-phospho-beta-D-ribosyl)glycinamide-binding positions include Asp286, Lys355, and Arg362–Arg363.

It belongs to the PurK/PurT family. As to quaternary structure, homodimer.

The catalysed reaction is N(1)-(5-phospho-beta-D-ribosyl)glycinamide + formate + ATP = N(2)-formyl-N(1)-(5-phospho-beta-D-ribosyl)glycinamide + ADP + phosphate + H(+). It participates in purine metabolism; IMP biosynthesis via de novo pathway; N(2)-formyl-N(1)-(5-phospho-D-ribosyl)glycinamide from N(1)-(5-phospho-D-ribosyl)glycinamide (formate route): step 1/1. Its function is as follows. Involved in the de novo purine biosynthesis. Catalyzes the transfer of formate to 5-phospho-ribosyl-glycinamide (GAR), producing 5-phospho-ribosyl-N-formylglycinamide (FGAR). Formate is provided by PurU via hydrolysis of 10-formyl-tetrahydrofolate. In Salmonella schwarzengrund (strain CVM19633), this protein is Formate-dependent phosphoribosylglycinamide formyltransferase.